The chain runs to 354 residues: Protein RecA (354 aa).

67–74 (GPESSGKT) lines the ATP pocket. The tract at residues 331–354 (GGANSSDSKTESDENIDLETGEVF) is disordered. Over residues 343-354 (DENIDLETGEVF) the composition is skewed to acidic residues.

This sequence belongs to the RecA family.

Its subcellular location is the cytoplasm. In terms of biological role, can catalyze the hydrolysis of ATP in the presence of single-stranded DNA, the ATP-dependent uptake of single-stranded DNA by duplex DNA, and the ATP-dependent hybridization of homologous single-stranded DNAs. It interacts with LexA causing its activation and leading to its autocatalytic cleavage. This is Protein RecA from Shewanella frigidimarina (strain NCIMB 400).